Reading from the N-terminus, the 461-residue chain is ATP synthase subunit beta (461 aa).

151–158 (GGAGVGKT) is an ATP binding site.

Belongs to the ATPase alpha/beta chains family. In terms of assembly, F-type ATPases have 2 components, CF(1) - the catalytic core - and CF(0) - the membrane proton channel. CF(1) has five subunits: alpha(3), beta(3), gamma(1), delta(1), epsilon(1). CF(0) has three main subunits: a(1), b(2) and c(9-12). The alpha and beta chains form an alternating ring which encloses part of the gamma chain. CF(1) is attached to CF(0) by a central stalk formed by the gamma and epsilon chains, while a peripheral stalk is formed by the delta and b chains.

The protein localises to the cell inner membrane. The catalysed reaction is ATP + H2O + 4 H(+)(in) = ADP + phosphate + 5 H(+)(out). In terms of biological role, produces ATP from ADP in the presence of a proton gradient across the membrane. The catalytic sites are hosted primarily by the beta subunits. The chain is ATP synthase subunit beta from Alteromonas mediterranea (strain DSM 17117 / CIP 110805 / LMG 28347 / Deep ecotype).